The primary structure comprises 299 residues: Protoheme IX farnesyltransferase (299 aa).

A run of 9 helical transmembrane segments spans residues 27–47 (VVAL…HEHF), 53–73 (LIAL…NHLI), 97–117 (FNVL…LMLW), 121–141 (LTAY…TLYL), 149–169 (IVIA…SITG), 175–195 (AWVL…ALAI), 222–242 (ILLY…VGMA), 244–264 (YLYL…AIKL), and 273–293 (AIEM…ALLL).

Belongs to the UbiA prenyltransferase family. Protoheme IX farnesyltransferase subfamily.

It localises to the cell inner membrane. The catalysed reaction is heme b + (2E,6E)-farnesyl diphosphate + H2O = Fe(II)-heme o + diphosphate. It functions in the pathway porphyrin-containing compound metabolism; heme O biosynthesis; heme O from protoheme: step 1/1. Its function is as follows. Converts heme B (protoheme IX) to heme O by substitution of the vinyl group on carbon 2 of heme B porphyrin ring with a hydroxyethyl farnesyl side group. The chain is Protoheme IX farnesyltransferase from Vibrio vulnificus (strain CMCP6).